A 341-amino-acid polypeptide reads, in one-letter code: Methionine import ATP-binding protein MetN 2 (341 aa).

Positions 2 to 241 (ILLENVKKIY…PQQDITKRFV (240 aa)) constitute an ABC transporter domain. Position 38 to 45 (38 to 45 (GYSGAGKS)) interacts with ATP.

The protein belongs to the ABC transporter superfamily. Methionine importer (TC 3.A.1.24) family. In terms of assembly, the complex is composed of two ATP-binding proteins (MetN), two transmembrane proteins (MetI) and a solute-binding protein (MetQ).

The protein resides in the cell membrane. It carries out the reaction L-methionine(out) + ATP + H2O = L-methionine(in) + ADP + phosphate + H(+). It catalyses the reaction D-methionine(out) + ATP + H2O = D-methionine(in) + ADP + phosphate + H(+). In terms of biological role, part of the ABC transporter complex MetNIQ involved in methionine import. Responsible for energy coupling to the transport system. This is Methionine import ATP-binding protein MetN 2 from Bacillus thuringiensis subsp. konkukian (strain 97-27).